The chain runs to 104 residues: Large ribosomal subunit protein uL23 (104 aa).

This sequence belongs to the universal ribosomal protein uL23 family. Part of the 50S ribosomal subunit. Contacts protein L29, and trigger factor when it is bound to the ribosome.

Functionally, one of the early assembly proteins it binds 23S rRNA. One of the proteins that surrounds the polypeptide exit tunnel on the outside of the ribosome. Forms the main docking site for trigger factor binding to the ribosome. In Rhodospirillum rubrum (strain ATCC 11170 / ATH 1.1.1 / DSM 467 / LMG 4362 / NCIMB 8255 / S1), this protein is Large ribosomal subunit protein uL23.